Consider the following 329-residue polypeptide: 4-hydroxythreonine-4-phosphate dehydrogenase (329 aa).

Residues His-136 and Thr-137 each coordinate substrate. A divalent metal cation contacts are provided by His-166, His-211, and His-266. Substrate is bound by residues Lys-274, Asn-283, and Arg-292.

The protein belongs to the PdxA family. As to quaternary structure, homodimer. It depends on Zn(2+) as a cofactor. Mg(2+) is required as a cofactor. Requires Co(2+) as cofactor.

The protein resides in the cytoplasm. The catalysed reaction is 4-(phosphooxy)-L-threonine + NAD(+) = 3-amino-2-oxopropyl phosphate + CO2 + NADH. The protein operates within cofactor biosynthesis; pyridoxine 5'-phosphate biosynthesis; pyridoxine 5'-phosphate from D-erythrose 4-phosphate: step 4/5. Functionally, catalyzes the NAD(P)-dependent oxidation of 4-(phosphooxy)-L-threonine (HTP) into 2-amino-3-oxo-4-(phosphooxy)butyric acid which spontaneously decarboxylates to form 3-amino-2-oxopropyl phosphate (AHAP). The chain is 4-hydroxythreonine-4-phosphate dehydrogenase from Salmonella arizonae (strain ATCC BAA-731 / CDC346-86 / RSK2980).